A 600-amino-acid polypeptide reads, in one-letter code: Cytidine monophosphate-N-acetylneuraminic acid hydroxylase (600 aa).

The Rieske domain maps to 9 to 107; that stretch reads LSPVEVASLK…VEMDENNRLL (99 aa). [2Fe-2S] cluster is bound by residues cysteine 49, histidine 51, cysteine 70, and histidine 73.

Belongs to the CMP-Neu5Ac hydroxylase family. Requires [2Fe-2S] cluster as cofactor.

The protein localises to the cytoplasm. It carries out the reaction CMP-N-acetyl-beta-neuraminate + 2 Fe(II)-[cytochrome b5] + O2 + 2 H(+) = CMP-N-glycoloyl-beta-neuraminate + 2 Fe(III)-[cytochrome b5] + H2O. The protein operates within amino-sugar metabolism; N-acetylneuraminate metabolism. In terms of biological role, sialic acids are components of carbohydrate chains of glycoconjugates and are involved in cell-cell recognition and cell-pathogen interactions. Catalyzes the conversion of CMP-N-acetylneuraminic acid (CMP-Neu5Ac) into its hydroxylated derivative CMP-N-glycolylneuraminic acid (CMP-Neu5Gc), a sialic acid abundantly expressed at the surface of many cells. The protein is Cytidine monophosphate-N-acetylneuraminic acid hydroxylase (CMAH) of Pan paniscus (Pygmy chimpanzee).